The primary structure comprises 432 residues: Putative D-alanyl-D-alanine carboxypeptidase (432 aa).

Residues 7-25 (ATVLLTFSLSAFAVEYPVL) traverse the membrane as a helical; Signal-anchor segment.

Belongs to the peptidase S12 family. YfeW subfamily.

It localises to the cell inner membrane. It catalyses the reaction Preferential cleavage: (Ac)2-L-Lys-D-Ala-|-D-Ala. Also transpeptidation of peptidyl-alanyl moieties that are N-acyl substituents of D-alanine.. The polypeptide is Putative D-alanyl-D-alanine carboxypeptidase (Salmonella agona (strain SL483)).